A 150-amino-acid polypeptide reads, in one-letter code: MSGWIATSKTRMQDFWSLLTFSSDLVDVKDSGDYPLTAPGLSWKKFQGSFCEFVGTLVCRCQYILLHDDFPMDNLISLLTGFSDSQVCAFCHTSTLAAMKLMTSLVRVALQLSLHEDINQRQYEAERNKGPGQRAPERLESLLEKHKELH.

Belongs to the SCC3 family.

The polypeptide is Putative STAG3-like protein 4 (STAG3L4) (Homo sapiens (Human)).